A 265-amino-acid polypeptide reads, in one-letter code: Leucyl/phenylalanyl-tRNA--protein transferase (265 aa).

The interval 244–265 is disordered; it reads LDTGPDPASSSVTEISLRPAAP.

This sequence belongs to the L/F-transferase family.

Its subcellular location is the cytoplasm. The catalysed reaction is N-terminal L-lysyl-[protein] + L-leucyl-tRNA(Leu) = N-terminal L-leucyl-L-lysyl-[protein] + tRNA(Leu) + H(+). It carries out the reaction N-terminal L-arginyl-[protein] + L-leucyl-tRNA(Leu) = N-terminal L-leucyl-L-arginyl-[protein] + tRNA(Leu) + H(+). It catalyses the reaction L-phenylalanyl-tRNA(Phe) + an N-terminal L-alpha-aminoacyl-[protein] = an N-terminal L-phenylalanyl-L-alpha-aminoacyl-[protein] + tRNA(Phe). Functions in the N-end rule pathway of protein degradation where it conjugates Leu, Phe and, less efficiently, Met from aminoacyl-tRNAs to the N-termini of proteins containing an N-terminal arginine or lysine. This chain is Leucyl/phenylalanyl-tRNA--protein transferase, found in Methylibium petroleiphilum (strain ATCC BAA-1232 / LMG 22953 / PM1).